The sequence spans 35 residues: Potassium channel toxin alpha-KTx 23.2 (35 aa).

3 disulfides stabilise this stretch: C6–C26, C12–C31, and C16–C33.

It belongs to the short scorpion toxin superfamily. Potassium channel inhibitor family. Alpha-KTx 23 subfamily. Expressed by the venom gland.

It is found in the secreted. Selectively and irreversibly binds (K(d)=2.9 pM) and blocks Kv1.3/KCNA3 potassium channels of human T-lymphocytes. Weakly blocks Kv1.2/KCNA2 (9%). This Vaejovis mexicanus smithi (Mexican scorpion) protein is Potassium channel toxin alpha-KTx 23.2.